The sequence spans 470 residues: GTPase Der (470 aa).

2 consecutive EngA-type G domains span residues 32 to 195 (PVVA…PTIS) and 206 to 379 (RRVA…KSWD). GTP contacts are provided by residues 38–45 (GRPNVGKS), 85–89 (DTGGW), 147–150 (NKVD), 212–219 (GKPNVGKS), 259–263 (DTAGL), and 324–327 (NKWD). In terms of domain architecture, KH-like spans 380-462 (TRVSTGRLNT…PIRINVRVRE (83 aa)).

This sequence belongs to the TRAFAC class TrmE-Era-EngA-EngB-Septin-like GTPase superfamily. EngA (Der) GTPase family. In terms of assembly, associates with the 50S ribosomal subunit.

GTPase that plays an essential role in the late steps of ribosome biogenesis. In Mycolicibacterium vanbaalenii (strain DSM 7251 / JCM 13017 / BCRC 16820 / KCTC 9966 / NRRL B-24157 / PYR-1) (Mycobacterium vanbaalenii), this protein is GTPase Der.